The sequence spans 372 residues: Queuine tRNA-ribosyltransferase (372 aa).

D92 functions as the Proton acceptor in the catalytic mechanism. Residues 92-96, D146, Q188, and G215 each bind substrate; that span reads DSGGY. The tract at residues 246–252 is RNA binding; it reads GIGSLRE. D265 functions as the Nucleophile in the catalytic mechanism. Residues 270 to 274 form an RNA binding; important for wobble base 34 recognition region; it reads TRLGR. Residues C303, C305, C308, and H334 each contribute to the Zn(2+) site.

This sequence belongs to the queuine tRNA-ribosyltransferase family. In terms of assembly, homodimer. Within each dimer, one monomer is responsible for RNA recognition and catalysis, while the other monomer binds to the replacement base PreQ1. Zn(2+) is required as a cofactor.

It catalyses the reaction 7-aminomethyl-7-carbaguanine + guanosine(34) in tRNA = 7-aminomethyl-7-carbaguanosine(34) in tRNA + guanine. Its pathway is tRNA modification; tRNA-queuosine biosynthesis. Functionally, catalyzes the base-exchange of a guanine (G) residue with the queuine precursor 7-aminomethyl-7-deazaguanine (PreQ1) at position 34 (anticodon wobble position) in tRNAs with GU(N) anticodons (tRNA-Asp, -Asn, -His and -Tyr). Catalysis occurs through a double-displacement mechanism. The nucleophile active site attacks the C1' of nucleotide 34 to detach the guanine base from the RNA, forming a covalent enzyme-RNA intermediate. The proton acceptor active site deprotonates the incoming PreQ1, allowing a nucleophilic attack on the C1' of the ribose to form the product. After dissociation, two additional enzymatic reactions on the tRNA convert PreQ1 to queuine (Q), resulting in the hypermodified nucleoside queuosine (7-(((4,5-cis-dihydroxy-2-cyclopenten-1-yl)amino)methyl)-7-deazaguanosine). In Prochlorococcus marinus (strain MIT 9215), this protein is Queuine tRNA-ribosyltransferase.